The sequence spans 455 residues: Adenylyltransferase and sulfurtransferase UBA4 (455 aa).

ATP contacts are provided by residues glycine 93, aspartate 114, 121–125 (SNLHR), lysine 138, and 182–183 (DH). Residues cysteine 224 and cysteine 227 each contribute to the Zn(2+) site. Cysteine 241 acts as the Glycyl thioester intermediate; for adenylyltransferase activity in catalysis. The Zn(2+) site is built by cysteine 302 and cysteine 305. Residues 355 to 453 (QSREHTLIDV…WSEDIDAAFP (99 aa)) form the Rhodanese domain. The active-site Cysteine persulfide intermediate; for sulfurtransferase activity is cysteine 413.

It in the N-terminal section; belongs to the HesA/MoeB/ThiF family. UBA4 subfamily. Requires Zn(2+) as cofactor.

Its subcellular location is the cytoplasm. It localises to the cytosol. Its pathway is tRNA modification; 5-methoxycarbonylmethyl-2-thiouridine-tRNA biosynthesis. Plays a central role in 2-thiolation of mcm(5)S(2)U at tRNA wobble positions of cytosolic tRNA(Lys), tRNA(Glu) and tRNA(Gln). Acts by mediating the C-terminal thiocarboxylation of sulfur carrier URM1. Its N-terminus first activates URM1 as acyl-adenylate (-COAMP), then the persulfide sulfur on the catalytic cysteine is transferred to URM1 to form thiocarboxylation (-COSH) of its C-terminus. The reaction probably involves hydrogen sulfide that is generated from the persulfide intermediate and that acts as a nucleophile towards URM1. Subsequently, a transient disulfide bond is formed. Does not use thiosulfate as sulfur donor; NFS1 probably acting as a sulfur donor for thiocarboxylation reactions. Prior mcm(5) tRNA modification by the elongator complex is required for 2-thiolation. May also be involved in protein urmylation. In Lodderomyces elongisporus (strain ATCC 11503 / CBS 2605 / JCM 1781 / NBRC 1676 / NRRL YB-4239) (Yeast), this protein is Adenylyltransferase and sulfurtransferase UBA4.